We begin with the raw amino-acid sequence, 425 residues long: Polyadenylate-binding protein RBP47B' (425 aa).

RRM domains are found at residues 24–102 (RTLW…LNWA), 116–195 (HSIF…AATP), and 237–309 (TTIS…WSKN).

The protein belongs to the polyadenylate-binding RBP47 family. In terms of assembly, interacts with the poly(A) tail of mRNA in nucleus.

The protein resides in the nucleus. Its subcellular location is the cytoplasmic granule. In terms of biological role, heterogeneous nuclear ribonucleoprotein (hnRNP)-protein binding the poly(A) tail of mRNA and probably involved in some steps of pre-mRNA maturation. The polypeptide is Polyadenylate-binding protein RBP47B' (RBP47B') (Arabidopsis thaliana (Mouse-ear cress)).